The chain runs to 587 residues: Formate--tetrahydrofolate ligase (587 aa).

Residue 73-80 (TPLGEGKS) participates in ATP binding.

It belongs to the formate--tetrahydrofolate ligase family.

The catalysed reaction is (6S)-5,6,7,8-tetrahydrofolate + formate + ATP = (6R)-10-formyltetrahydrofolate + ADP + phosphate. The protein operates within one-carbon metabolism; tetrahydrofolate interconversion. This Syntrophobacter fumaroxidans (strain DSM 10017 / MPOB) protein is Formate--tetrahydrofolate ligase.